The chain runs to 351 residues: Glycerol-3-phosphate dehydrogenase [NAD(P)+] (351 aa).

NADPH contacts are provided by Ser-12, Trp-13, His-33, and Lys-114. Sn-glycerol 3-phosphate is bound by residues Lys-114, Gly-145, and Ser-147. Residue Ala-149 coordinates NADPH. Sn-glycerol 3-phosphate-binding residues include Lys-200, Asp-253, Ser-263, Arg-264, and Asn-265. Lys-200 serves as the catalytic Proton acceptor. Residue Arg-264 coordinates NADPH. NADPH contacts are provided by Val-288 and Glu-290.

This sequence belongs to the NAD-dependent glycerol-3-phosphate dehydrogenase family.

The protein localises to the cytoplasm. The catalysed reaction is sn-glycerol 3-phosphate + NAD(+) = dihydroxyacetone phosphate + NADH + H(+). It catalyses the reaction sn-glycerol 3-phosphate + NADP(+) = dihydroxyacetone phosphate + NADPH + H(+). It functions in the pathway membrane lipid metabolism; glycerophospholipid metabolism. In terms of biological role, catalyzes the reduction of the glycolytic intermediate dihydroxyacetone phosphate (DHAP) to sn-glycerol 3-phosphate (G3P), the key precursor for phospholipid synthesis. The chain is Glycerol-3-phosphate dehydrogenase [NAD(P)+] from Lacticaseibacillus casei (strain BL23) (Lactobacillus casei).